Reading from the N-terminus, the 160-residue chain is Probable chemoreceptor glutamine deamidase CheD 1 (160 aa).

It belongs to the CheD family.

The catalysed reaction is L-glutaminyl-[protein] + H2O = L-glutamyl-[protein] + NH4(+). In terms of biological role, probably deamidates glutamine residues to glutamate on methyl-accepting chemotaxis receptors (MCPs), playing an important role in chemotaxis. In Syntrophus aciditrophicus (strain SB), this protein is Probable chemoreceptor glutamine deamidase CheD 1.